The sequence spans 185 residues: V-type ATP synthase subunit E (185 aa).

It belongs to the V-ATPase E subunit family.

Functionally, produces ATP from ADP in the presence of a proton gradient across the membrane. This Deinococcus geothermalis (strain DSM 11300 / CIP 105573 / AG-3a) protein is V-type ATP synthase subunit E.